A 285-amino-acid chain; its full sequence is Probable endonuclease 4 (285 aa).

9 residues coordinate Zn(2+): His69, His109, Glu145, Asp179, His182, His216, Asp229, His231, and Glu261.

It belongs to the AP endonuclease 2 family. Zn(2+) is required as a cofactor.

The enzyme catalyses Endonucleolytic cleavage to 5'-phosphooligonucleotide end-products.. Endonuclease IV plays a role in DNA repair. It cleaves phosphodiester bonds at apurinic or apyrimidinic (AP) sites, generating a 3'-hydroxyl group and a 5'-terminal sugar phosphate. The protein is Probable endonuclease 4 of Citrobacter koseri (strain ATCC BAA-895 / CDC 4225-83 / SGSC4696).